Here is a 427-residue protein sequence, read N- to C-terminus: Glutamate-1-semialdehyde 2,1-aminomutase (427 aa).

The residue at position 265 (Lys265) is an N6-(pyridoxal phosphate)lysine.

Belongs to the class-III pyridoxal-phosphate-dependent aminotransferase family. HemL subfamily. As to quaternary structure, homodimer. It depends on pyridoxal 5'-phosphate as a cofactor.

It localises to the cytoplasm. It carries out the reaction (S)-4-amino-5-oxopentanoate = 5-aminolevulinate. The protein operates within porphyrin-containing compound metabolism; protoporphyrin-IX biosynthesis; 5-aminolevulinate from L-glutamyl-tRNA(Glu): step 2/2. In Burkholderia mallei (strain NCTC 10229), this protein is Glutamate-1-semialdehyde 2,1-aminomutase.